The chain runs to 388 residues: Coproporphyrin III ferrochelatase (388 aa).

The Fe-coproporphyrin III site is built by Ser-59 and Tyr-124. Residues His-186 and Glu-276 each contribute to the Fe(2+) site. The disordered stretch occupies residues 349–369 (QSPQHASRAVTDAAATGRRGD).

This sequence belongs to the ferrochelatase family.

It localises to the cytoplasm. The catalysed reaction is Fe-coproporphyrin III + 2 H(+) = coproporphyrin III + Fe(2+). It functions in the pathway porphyrin-containing compound metabolism; protoheme biosynthesis. In terms of biological role, involved in coproporphyrin-dependent heme b biosynthesis. Catalyzes the insertion of ferrous iron into coproporphyrin III to form Fe-coproporphyrin III. The sequence is that of Coproporphyrin III ferrochelatase from Frankia alni (strain DSM 45986 / CECT 9034 / ACN14a).